Here is a 290-residue protein sequence, read N- to C-terminus: Isopentenyl-diphosphate Delta-isomerase II (290 aa).

Residues 108-260 form the Nudix hydrolase domain; the sequence is MLHRAFTVFL…GLKLSPWFRL (153 aa). Active-site residues include Cys145 and Glu207.

It belongs to the IPP isomerase type 1 family.

The enzyme catalyses isopentenyl diphosphate = dimethylallyl diphosphate. It functions in the pathway isoprenoid biosynthesis; dimethylallyl diphosphate biosynthesis; dimethylallyl diphosphate from isopentenyl diphosphate: step 1/1. It participates in porphyrin-containing compound metabolism; chlorophyll biosynthesis. In terms of biological role, catalyzes the 1,3-allylic rearrangement of the homoallylic substrate isopentenyl (IPP) to its highly electrophilic allylic isomer, dimethylallyl diphosphate (DMAPP). The chain is Isopentenyl-diphosphate Delta-isomerase II (IPI2) from Clarkia xantiana (Gunsight clarkia).